A 310-amino-acid chain; its full sequence is Tyrosine recombinase XerC (310 aa).

The 82-residue stretch at 22 to 103 (SQMLEAIEDF…SVKSFSTWAV (82 aa)) folds into the Core-binding (CB) domain. Positions 124–304 (NLPRVLGEVQ…SSQRLLEAFR (181 aa)) constitute a Tyr recombinase domain. Active-site residues include Arg-165, Lys-189, His-256, Arg-259, and His-282. The active-site O-(3'-phospho-DNA)-tyrosine intermediate is Tyr-291.

The protein belongs to the 'phage' integrase family. XerC subfamily. As to quaternary structure, forms a cyclic heterotetrameric complex composed of two molecules of XerC and two molecules of XerD.

Its subcellular location is the cytoplasm. In terms of biological role, site-specific tyrosine recombinase, which acts by catalyzing the cutting and rejoining of the recombining DNA molecules. The XerC-XerD complex is essential to convert dimers of the bacterial chromosome into monomers to permit their segregation at cell division. It also contributes to the segregational stability of plasmids. The sequence is that of Tyrosine recombinase XerC from Corynebacterium efficiens (strain DSM 44549 / YS-314 / AJ 12310 / JCM 11189 / NBRC 100395).